Consider the following 31-residue polypeptide: MDSVAYIIVLAMALSVLFFAIAFREPPRIEK.

A helical membrane pass occupies residues 3 to 23 (SVAYIIVLAMALSVLFFAIAF).

This sequence belongs to the PsbT family. As to quaternary structure, PSII is composed of 1 copy each of membrane proteins PsbA, PsbB, PsbC, PsbD, PsbE, PsbF, PsbH, PsbI, PsbJ, PsbK, PsbL, PsbM, PsbT, PsbX, PsbY, PsbZ, Psb30/Ycf12, peripheral proteins PsbO, CyanoQ (PsbQ), PsbU, PsbV and a large number of cofactors. It forms dimeric complexes.

Its subcellular location is the cellular thylakoid membrane. Found at the monomer-monomer interface of the photosystem II (PS II) dimer, plays a role in assembly and dimerization of PSII. PSII is a light-driven water plastoquinone oxidoreductase, using light energy to abstract electrons from H(2)O, generating a proton gradient subsequently used for ATP formation. The sequence is that of Photosystem II reaction center protein T from Picosynechococcus sp. (strain ATCC 27264 / PCC 7002 / PR-6) (Agmenellum quadruplicatum).